The primary structure comprises 302 residues: MAENVQDIKRRIKSVNSTMQITHAMELVASAKLRKSRELAEGRRPYFEAMIESIGRIVEKSGNARNIFMDQREVKKTAYIIITGDKGLAGGYNVNVAKLVEEHITDKENAVLFTVGSRGRDHFRNREYHIQGEYLGISERPNFFNAKEVTAIVMEGFKNGEYDEVYIAYTKFVSTITQHAQMMKLLPLSAEELITSGKVKTTEETKEEKSKMSDRELTIMTYEPEPEELLKYLIPNFVSSTVYGSMIESAASEQGARRTAMESATTNANEMIDGLTLQYNRVRQAAITQEISEIVGGAEALN.

Belongs to the ATPase gamma chain family. As to quaternary structure, F-type ATPases have 2 components, CF(1) - the catalytic core - and CF(0) - the membrane proton channel. CF(1) has five subunits: alpha(3), beta(3), gamma(1), delta(1), epsilon(1). CF(0) has three main subunits: a, b and c.

It localises to the cell membrane. Inhibited by nitrate. Functionally, produces ATP from ADP in the presence of a proton gradient across the membrane. The gamma chain is believed to be important in regulating ATPase activity and the flow of protons through the CF(0) complex. The sequence is that of ATP synthase gamma chain, sodium ion specific (atpG) from Acetobacterium woodii (strain ATCC 29683 / DSM 1030 / JCM 2381 / KCTC 1655 / WB1).